A 397-amino-acid chain; its full sequence is Aromatic-amino-acid aminotransferase (397 aa).

Residues glycine 34, tyrosine 66, tryptophan 131, and asparagine 184 each contribute to the substrate site. An N6-(pyridoxal phosphate)lysine modification is found at lysine 247. Residues arginine 281 and arginine 375 each contribute to the substrate site.

It belongs to the class-I pyridoxal-phosphate-dependent aminotransferase family. As to quaternary structure, homodimer. It depends on pyridoxal 5'-phosphate as a cofactor.

Its subcellular location is the cytoplasm. It catalyses the reaction an aromatic L-alpha-amino acid + 2-oxoglutarate = an aromatic oxo-acid + L-glutamate. The enzyme catalyses (3S)-3-methyl-L-phenylalanine + 2-oxoglutarate = (3S)-2-oxo-3-phenylbutanoate + L-glutamate. The protein operates within amino-acid biosynthesis; L-phenylalanine biosynthesis; L-phenylalanine from phenylpyruvate (ArAT route): step 1/1. It functions in the pathway amino-acid biosynthesis; L-tyrosine biosynthesis; L-tyrosine from (4-hydroxyphenyl)pyruvate: step 1/1. Broad-specificity enzyme that catalyzes the transamination of 2-ketoisocaproate, p-hydroxyphenylpyruvate, and phenylpyruvate to yield leucine, tyrosine, and phenylalanine, respectively. In vitro, is able to catalyze the conversion of beta-methyl phenylpyruvate to the nonproteinogenic amino acid (2S,3S)-beta-methyl-phenylalanine, a building block of the antibiotic mannopeptimycin produced by Streptomyces hygroscopicus NRRL3085. This chain is Aromatic-amino-acid aminotransferase (tyrB), found in Escherichia coli (strain K12).